Consider the following 209-residue polypeptide: Uracil phosphoribosyltransferase (209 aa).

Residues Arg79, Arg104, and 131–139 (DPMLATGGS) contribute to the 5-phospho-alpha-D-ribose 1-diphosphate site. Uracil is bound by residues Ile194 and 199 to 201 (GDA). 5-phospho-alpha-D-ribose 1-diphosphate is bound at residue Asp200.

This sequence belongs to the UPRTase family. The cofactor is Mg(2+).

The enzyme catalyses UMP + diphosphate = 5-phospho-alpha-D-ribose 1-diphosphate + uracil. It participates in pyrimidine metabolism; UMP biosynthesis via salvage pathway; UMP from uracil: step 1/1. Allosterically activated by GTP. Its function is as follows. Catalyzes the conversion of uracil and 5-phospho-alpha-D-ribose 1-diphosphate (PRPP) to UMP and diphosphate. The chain is Uracil phosphoribosyltransferase from Symbiobacterium thermophilum (strain DSM 24528 / JCM 14929 / IAM 14863 / T).